A 137-amino-acid polypeptide reads, in one-letter code: Large ribosomal subunit protein mL41 (137 aa).

Residues Met1–Arg13 constitute a mitochondrion transit peptide.

Belongs to the mitochondrion-specific ribosomal protein mL41 family. As to quaternary structure, component of the mitochondrial large ribosomal subunit (mt-LSU). Mature mammalian 55S mitochondrial ribosomes consist of a small (28S) and a large (39S) subunit. The 28S small subunit contains a 12S ribosomal RNA (12S mt-rRNA) and 30 different proteins. The 39S large subunit contains a 16S rRNA (16S mt-rRNA), a copy of mitochondrial valine transfer RNA (mt-tRNA(Val)), which plays an integral structural role, and 52 different proteins. Interacts with BCL2. Present in kidney, liver, thymus and testis, and at lower level in brain and spleen (at protein level).

It localises to the mitochondrion. In terms of biological role, component of the mitochondrial ribosome large subunit. Also involved in apoptosis and cell cycle. Enhances p53/TP53 stability, thereby contributing to p53/TP53-induced apoptosis in response to growth-inhibitory condition. Enhances p53/TP53 translocation to the mitochondria. Has the ability to arrest the cell cycle at the G1 phase, possibly by stabilizing the CDKN1A and CDKN1B (p27Kip1) proteins. The chain is Large ribosomal subunit protein mL41 (MRPL41) from Homo sapiens (Human).